Consider the following 308-residue polypeptide: Cytochrome b (308 aa).

Helical transmembrane passes span 1-21 (SGSL…FLAA), 45-66 (WLIR…YLHI), 81-101 (WNIG…GYVL), and 146-166 (FFAL…VHLT). 2 residues coordinate heme b: histidine 51 and histidine 65. Residues histidine 150 and histidine 164 each contribute to the heme b site. Histidine 169 lines the a ubiquinone pocket. The next 3 membrane-spanning stretches (helical) occupy residues 194 to 214 (TKDV…ALFS), 256 to 276 (LGGV…PLLH), and 288 to 308 (LSQI…WVGS).

It belongs to the cytochrome b family. The cytochrome bc1 complex contains 11 subunits: 3 respiratory subunits (MT-CYB, CYC1 and UQCRFS1), 2 core proteins (UQCRC1 and UQCRC2) and 6 low-molecular weight proteins (UQCRH/QCR6, UQCRB/QCR7, UQCRQ/QCR8, UQCR10/QCR9, UQCR11/QCR10 and a cleavage product of UQCRFS1). This cytochrome bc1 complex then forms a dimer. Heme b serves as cofactor.

It localises to the mitochondrion inner membrane. Component of the ubiquinol-cytochrome c reductase complex (complex III or cytochrome b-c1 complex) that is part of the mitochondrial respiratory chain. The b-c1 complex mediates electron transfer from ubiquinol to cytochrome c. Contributes to the generation of a proton gradient across the mitochondrial membrane that is then used for ATP synthesis. This is Cytochrome b (MT-CYB) from Garritornis isidorei (Papuan babbler).